Reading from the N-terminus, the 462-residue chain is Argininosuccinate lyase (462 aa).

This sequence belongs to the lyase 1 family. Argininosuccinate lyase subfamily.

The protein resides in the cytoplasm. The enzyme catalyses 2-(N(omega)-L-arginino)succinate = fumarate + L-arginine. The protein operates within amino-acid biosynthesis; L-arginine biosynthesis; L-arginine from L-ornithine and carbamoyl phosphate: step 3/3. This Chloroflexus aggregans (strain MD-66 / DSM 9485) protein is Argininosuccinate lyase.